A 113-amino-acid chain; its full sequence is Large ribosomal subunit protein uL22 (113 aa).

This sequence belongs to the universal ribosomal protein uL22 family. In terms of assembly, part of the 50S ribosomal subunit.

In terms of biological role, this protein binds specifically to 23S rRNA; its binding is stimulated by other ribosomal proteins, e.g. L4, L17, and L20. It is important during the early stages of 50S assembly. It makes multiple contacts with different domains of the 23S rRNA in the assembled 50S subunit and ribosome. The globular domain of the protein is located near the polypeptide exit tunnel on the outside of the subunit, while an extended beta-hairpin is found that lines the wall of the exit tunnel in the center of the 70S ribosome. This Solibacter usitatus (strain Ellin6076) protein is Large ribosomal subunit protein uL22.